The primary structure comprises 134 residues: 6,7-dimethyl-8-ribityllumazine synthase (134 aa).

5-amino-6-(D-ribitylamino)uracil-binding positions include Phe12, 44–46 (VFD), and 68–70 (SVI). 73-74 (ET) is a binding site for (2S)-2-hydroxy-3-oxobutyl phosphate. The Proton donor role is filled by His76. 5-amino-6-(D-ribitylamino)uracil is bound at residue Leu101. Arg116 contacts (2S)-2-hydroxy-3-oxobutyl phosphate.

This sequence belongs to the DMRL synthase family.

It carries out the reaction (2S)-2-hydroxy-3-oxobutyl phosphate + 5-amino-6-(D-ribitylamino)uracil = 6,7-dimethyl-8-(1-D-ribityl)lumazine + phosphate + 2 H2O + H(+). Its pathway is cofactor biosynthesis; riboflavin biosynthesis; riboflavin from 2-hydroxy-3-oxobutyl phosphate and 5-amino-6-(D-ribitylamino)uracil: step 1/2. In terms of biological role, catalyzes the formation of 6,7-dimethyl-8-ribityllumazine by condensation of 5-amino-6-(D-ribitylamino)uracil with 3,4-dihydroxy-2-butanone 4-phosphate. This is the penultimate step in the biosynthesis of riboflavin. This chain is 6,7-dimethyl-8-ribityllumazine synthase, found in Methanosarcina acetivorans (strain ATCC 35395 / DSM 2834 / JCM 12185 / C2A).